The following is a 187-amino-acid chain: Elongation factor P (187 aa).

It belongs to the elongation factor P family.

The protein localises to the cytoplasm. The protein operates within protein biosynthesis; polypeptide chain elongation. Involved in peptide bond synthesis. Stimulates efficient translation and peptide-bond synthesis on native or reconstituted 70S ribosomes in vitro. Probably functions indirectly by altering the affinity of the ribosome for aminoacyl-tRNA, thus increasing their reactivity as acceptors for peptidyl transferase. This Nocardioides sp. (strain ATCC BAA-499 / JS614) protein is Elongation factor P.